The primary structure comprises 410 residues: Argininosuccinate synthase (410 aa).

Residue 8 to 16 coordinates ATP; it reads AYSGGLDTS. Tyr-86 contributes to the L-citrulline binding site. Residue Gly-116 coordinates ATP. L-aspartate-binding residues include Thr-118, Asn-122, and Asp-123. Asn-122 contacts L-citrulline. L-citrulline contacts are provided by Arg-126, Ser-174, Glu-259, and Tyr-271.

Belongs to the argininosuccinate synthase family. Type 1 subfamily. Homotetramer.

The protein resides in the cytoplasm. It carries out the reaction L-citrulline + L-aspartate + ATP = 2-(N(omega)-L-arginino)succinate + AMP + diphosphate + H(+). It functions in the pathway amino-acid biosynthesis; L-arginine biosynthesis; L-arginine from L-ornithine and carbamoyl phosphate: step 2/3. In Leuconostoc citreum (strain KM20), this protein is Argininosuccinate synthase.